Reading from the N-terminus, the 397-residue chain is 1-deoxy-D-xylulose 5-phosphate reductoisomerase (397 aa).

NADPH-binding residues include Thr-10, Gly-11, Ser-12, Ile-13, Gly-36, Asn-38, and Asn-128. Lys-129 contacts 1-deoxy-D-xylulose 5-phosphate. Glu-130 contributes to the NADPH binding site. Asp-154 serves as a coordination point for Mn(2+). Residues Ser-155, Glu-156, Ser-180, and His-203 each coordinate 1-deoxy-D-xylulose 5-phosphate. Residue Glu-156 participates in Mn(2+) binding. Gly-209 contacts NADPH. Residues Asn-221, Lys-222, and Glu-225 each coordinate 1-deoxy-D-xylulose 5-phosphate. Glu-225 provides a ligand contact to Mn(2+).

Belongs to the DXR family. Mg(2+) is required as a cofactor. The cofactor is Mn(2+).

It carries out the reaction 2-C-methyl-D-erythritol 4-phosphate + NADP(+) = 1-deoxy-D-xylulose 5-phosphate + NADPH + H(+). It functions in the pathway isoprenoid biosynthesis; isopentenyl diphosphate biosynthesis via DXP pathway; isopentenyl diphosphate from 1-deoxy-D-xylulose 5-phosphate: step 1/6. Catalyzes the NADPH-dependent rearrangement and reduction of 1-deoxy-D-xylulose-5-phosphate (DXP) to 2-C-methyl-D-erythritol 4-phosphate (MEP). The chain is 1-deoxy-D-xylulose 5-phosphate reductoisomerase from Solibacter usitatus (strain Ellin6076).